The chain runs to 89 residues: Small ribosomal subunit protein bS20 (89 aa).

Belongs to the bacterial ribosomal protein bS20 family.

Functionally, binds directly to 16S ribosomal RNA. This chain is Small ribosomal subunit protein bS20, found in Xanthobacter autotrophicus (strain ATCC BAA-1158 / Py2).